Here is a 71-residue protein sequence, read N- to C-terminus: Sperm-associated antigen 11A (71 aa).

Residues 1-19 (MIPRLLPFFASLLFAALLF) form the signal peptide. 3 cysteine pairs are disulfide-bonded: Cys32–Cys61, Cys39–Cys54, and Cys44–Cys62.

This sequence belongs to the beta-defensin family.

The protein localises to the secreted. Functionally, has antimicrobial activity against E.coli. Plays a role in the defense response in the male reproductive tract, contributing to sperm maturation, storage and protection. This chain is Sperm-associated antigen 11A, found in Mus musculus (Mouse).